Reading from the N-terminus, the 741-residue chain is Zinc metalloproteinase nas-30 (741 aa).

2 stretches are compositionally biased toward low complexity: residues 71 to 85 (KPAP…APAP) and 97 to 118 (PAPK…DAPP). The disordered stretch occupies residues 71–122 (KPAPAAAGPRSAPAPTNEDYNTDIDVPAPKAKARAAPTPRRAQADAPPVYRQ). The Peptidase M12A domain maps to 324 to 516 (KVITGSVYRW…VKQVNRLYCN (193 aa)). Intrachain disulfides connect Cys364–Cys515, Cys385–Cys404, Cys519–Cys539, Cys541–Cys550, Cys562–Cys583, and Cys610–Cys630. His412 contacts Zn(2+). Residue Glu413 is part of the active site. Zn(2+) contacts are provided by His416 and His422. The EGF-like domain maps to 539-550 (CKCPDGLGGKLC). A CUB domain is found at 550-648 (CGRAAKGTDH…ISDQSEALIL (99 aa)). N-linked (GlcNAc...) asparagine glycosylation occurs at Asn633.

Zn(2+) serves as cofactor.

In terms of biological role, metalloprotease. This chain is Zinc metalloproteinase nas-30, found in Caenorhabditis elegans.